A 269-amino-acid polypeptide reads, in one-letter code: Phosphonoacetaldehyde hydrolase (269 aa).

The active-site Nucleophile is the Asp-10. 2 residues coordinate Mg(2+): Asp-10 and Ala-12. Lys-52 (schiff-base intermediate with substrate) is an active-site residue. Residue Asp-186 coordinates Mg(2+).

It belongs to the HAD-like hydrolase superfamily. PhnX family. Homodimer. Requires Mg(2+) as cofactor.

It carries out the reaction phosphonoacetaldehyde + H2O = acetaldehyde + phosphate + H(+). Involved in phosphonate degradation. This Salmonella paratyphi A (strain ATCC 9150 / SARB42) protein is Phosphonoacetaldehyde hydrolase.